Reading from the N-terminus, the 361-residue chain is Peptide chain release factor 1 (361 aa).

The residue at position 237 (glutamine 237) is an N5-methylglutamine. Residues 284–296 are compositionally biased toward basic and acidic residues; that stretch reads EDEKRRSEEDSTR. The disordered stretch occupies residues 284–305; the sequence is EDEKRRSEEDSTRRNLVSSGDR.

The protein belongs to the prokaryotic/mitochondrial release factor family. In terms of processing, methylated by PrmC. Methylation increases the termination efficiency of RF1.

It is found in the cytoplasm. Its function is as follows. Peptide chain release factor 1 directs the termination of translation in response to the peptide chain termination codons UAG and UAA. The sequence is that of Peptide chain release factor 1 from Shewanella piezotolerans (strain WP3 / JCM 13877).